The primary structure comprises 207 residues: Thiamine-phosphate synthase (207 aa).

4-amino-2-methyl-5-(diphosphooxymethyl)pyrimidine-binding positions include 41-45 (QLRLK) and Asn73. Positions 74 and 93 each coordinate Mg(2+). Thr111 serves as a coordination point for 4-amino-2-methyl-5-(diphosphooxymethyl)pyrimidine. 138 to 140 (TKT) is a binding site for 2-[(2R,5Z)-2-carboxy-4-methylthiazol-5(2H)-ylidene]ethyl phosphate. Residue Lys141 coordinates 4-amino-2-methyl-5-(diphosphooxymethyl)pyrimidine. Gly168 is a 2-[(2R,5Z)-2-carboxy-4-methylthiazol-5(2H)-ylidene]ethyl phosphate binding site.

The protein belongs to the thiamine-phosphate synthase family. Requires Mg(2+) as cofactor.

It catalyses the reaction 2-[(2R,5Z)-2-carboxy-4-methylthiazol-5(2H)-ylidene]ethyl phosphate + 4-amino-2-methyl-5-(diphosphooxymethyl)pyrimidine + 2 H(+) = thiamine phosphate + CO2 + diphosphate. The enzyme catalyses 2-(2-carboxy-4-methylthiazol-5-yl)ethyl phosphate + 4-amino-2-methyl-5-(diphosphooxymethyl)pyrimidine + 2 H(+) = thiamine phosphate + CO2 + diphosphate. The catalysed reaction is 4-methyl-5-(2-phosphooxyethyl)-thiazole + 4-amino-2-methyl-5-(diphosphooxymethyl)pyrimidine + H(+) = thiamine phosphate + diphosphate. The protein operates within cofactor biosynthesis; thiamine diphosphate biosynthesis; thiamine phosphate from 4-amino-2-methyl-5-diphosphomethylpyrimidine and 4-methyl-5-(2-phosphoethyl)-thiazole: step 1/1. Its function is as follows. Condenses 4-methyl-5-(beta-hydroxyethyl)thiazole monophosphate (THZ-P) and 2-methyl-4-amino-5-hydroxymethyl pyrimidine pyrophosphate (HMP-PP) to form thiamine monophosphate (TMP). The polypeptide is Thiamine-phosphate synthase (Pelagibacter ubique (strain HTCC1062)).